A 615-amino-acid polypeptide reads, in one-letter code: RUN domain-containing protein 1 (615 aa).

Residues Thr15–Arg41 are disordered. Residues Glu24–Ser33 are compositionally biased toward acidic residues. Ser73 carries the post-translational modification Phosphoserine. 2 coiled-coil regions span residues Asp76–His102 and Arg163–Glu238. The tract at residues Asp147–Thr180 is disordered. Residues Pro158–Thr180 show a composition bias toward basic and acidic residues. The RUN domain occupies Glu423 to Ala604. A Phosphoserine modification is found at Ser499.

In terms of biological role, may play a role as p53/TP53 inhibitor and thus may have oncogenic activity. The protein is RUN domain-containing protein 1 (Rundc1) of Mus musculus (Mouse).